The sequence spans 280 residues: Band 7 protein AGAP004871 (280 aa).

The chain crosses the membrane as a helical span at residues 23 to 43 (ILIFLSWVLVVLTMPFSLLVC).

This sequence belongs to the band 7/mec-2 family.

The protein resides in the membrane. This Anopheles gambiae (African malaria mosquito) protein is Band 7 protein AGAP004871.